The sequence spans 108 residues: uncharacterized protein (108 aa).

3 cysteine pairs are disulfide-bonded: C44/C82, C60/C78, and C63/C91.

This sequence belongs to the arthropod CHH/MIH/GIH/VIH hormone family.

This is an uncharacterized protein from Caenorhabditis elegans.